A 186-amino-acid polypeptide reads, in one-letter code: Elongation factor P (186 aa).

The protein belongs to the elongation factor P family.

The protein resides in the cytoplasm. The protein operates within protein biosynthesis; polypeptide chain elongation. Functionally, involved in peptide bond synthesis. Stimulates efficient translation and peptide-bond synthesis on native or reconstituted 70S ribosomes in vitro. Probably functions indirectly by altering the affinity of the ribosome for aminoacyl-tRNA, thus increasing their reactivity as acceptors for peptidyl transferase. This is Elongation factor P from Streptococcus mutans serotype c (strain ATCC 700610 / UA159).